The chain runs to 462 residues: MNVAGGGTGTTAGSAGNNNTLPMAQLADGWLELESDPGLFTLLLEDFGCHDVQVEEVYDLQKPIESPYGFIFLFRWIEERRARRKIVETTAEIFVKDEEAISSIFFAQQVVPNSCATHALLSVLLNCNENNLQLGETLSRLKAHTKGMSPENKGLAIGNTPELACAHNSHAMPQARRRLERTGAGVASCRFTGEAFHFVSFVPINGQLFELDGLKPYPMNHGCWEEHEDWTDKFRRVMAERLGIATGEQDIRFNLMAVVPDRRIAITHKLKMLRTNQAIVSGTLQKLLKADEQGERDEQQRPDTPNTLLEPSAFTARDLQSLLKNLDTEIAINEQHLADENDRRQMFKVDASRRTHNYDKFICTFLTMLAHQGVLGELVSQHLLPSKKISGQSAANRLNKQNSAAASTANSSAGATAGGAKSQQQQQQQQQPQQPQTPKNGKSPGKTPGRRRKGRNKCRKRK.

One can recognise a UCH catalytic domain in the interval 29 to 260; the sequence is GWLELESDPG…IRFNLMAVVP (232 aa). Catalysis depends on cysteine 115, which acts as the Nucleophile. Catalysis depends on histidine 197, which acts as the Proton donor. A ULD domain is found at 357 to 385; sequence NYDKFICTFLTMLAHQGVLGELVSQHLLP. Residues 387–462 are positively charged C-terminal tail required for binding nucleosomes; that stretch reads KKISGQSAAN…KGRNKCRKRK (76 aa). The tract at residues 394–462 is disordered; that stretch reads AANRLNKQNS…KGRNKCRKRK (69 aa). Low complexity predominate over residues 399–447; sequence NKQNSAAASTANSSAGATAGGAKSQQQQQQQQQPQQPQTPKNGKSPGKT. A compositionally biased stretch (basic residues) spans 448–462; sequence PGRRRKGRNKCRKRK.

This sequence belongs to the peptidase C12 family. BAP1 subfamily. Catalytic component of the polycomb repressive deubiquitinase (PR-DUB) complex, at least composed of caly/calypso, Asx and sba (MBD5/6 homolog). The PR-DUB complex associates with nucleosomes to mediate deubiquitination of histone H2AK118ub1 substrates; the association requires the positively charged C-terminal tail of caly, probably due to direct binding of DNA. Interacts (via ULD domain) with Asx (via DEUBAD domain); the interaction produces a stable heterodimer with a composite binding site for ubiquitin. Homodimerizes (via coiled-coil hinge-region between the UCH and ULD domains) to mediate assembly of 2 copies of the caly-Asx heterodimer into a bisymmetric tetramer; dimerization enhances PR-DUB association with nucleosomes.

The protein localises to the nucleus. It carries out the reaction Thiol-dependent hydrolysis of ester, thioester, amide, peptide and isopeptide bonds formed by the C-terminal Gly of ubiquitin (a 76-residue protein attached to proteins as an intracellular targeting signal).. Functionally, catalytic component of the polycomb repressive deubiquitinase (PR-DUB) complex, a complex that specifically mediates deubiquitination of histone H2A monoubiquitinated at 'Lys-119' (H2AK118ub1). Mediates bisymmetric organization of the PR-DUB complex and is involved in association with nucleosomes to mediate deubiquitination. Does not deubiquitinate monoubiquitinated histone H2B. Required to maintain the transcriptionally repressive state of homeotic genes throughout development. The PR-DUB complex has weak or no activity toward 'Lys-48'- and 'Lys-63'-linked polyubiquitin chains. Polycomb group (PcG) protein. The sequence is that of Ubiquitin carboxyl-terminal hydrolase calypso from Drosophila virilis (Fruit fly).